Reading from the N-terminus, the 69-residue chain is Snake venom metalloproteinase BnP2 (69 aa).

Residues Tyr1 to Arg69 form the Peptidase M12B domain. A Ca(2+)-binding site is contributed by Glu3.

It belongs to the venom metalloproteinase (M12B) family. P-I subfamily. Monomer. Zn(2+) is required as a cofactor. As to expression, expressed by the venom gland.

It localises to the secreted. Inhibited by EDTA. This protein is a zinc protease from snake venom that is devoid of significant myotoxic and hemorrhagic activities. It hydrolyzes the Aalpha-chain and more slowly the Bbeta-chain of fibrin and fibrinogen, without affecting the gamma-chains. It induces cell detachment and a apoptosis (anoikis) in endothelial cells. This is Snake venom metalloproteinase BnP2 from Bothrops pauloensis (Neuwied's lancehead).